Reading from the N-terminus, the 314-residue chain is MNVIKISPRGYCYGVVDAMVIAKNAALDKSLPRPIYILGMIVHNKHVTDAFEKEGIYTLDGPNRLEILNQVDKGTVIFTAHGVSPEVRKIAEDKGLVAIDATCPDVTKTHDLIRKMKAEGYHVIYIGKKGHPEPEGAVGVAPDIVHLVETEEDVERLDIEAEKLIVTNQTTMSQWDVHDIMEKVKEKYPDVEFHQEICLATQVRQEAVSEQAKKADLTIVVGDPKSNNSNRLAQVSEEIAGTKAYRIGDLSELKLEWLDGVETVAVTAGASTPTPITKEVIRFLEQFDHEDPSTWKISHEVPLHKILPKVKAKT.

[4Fe-4S] cluster is bound at residue C12. H43 and H81 together coordinate (2E)-4-hydroxy-3-methylbut-2-enyl diphosphate. Dimethylallyl diphosphate-binding residues include H43 and H81. Residues H43 and H81 each contribute to the isopentenyl diphosphate site. [4Fe-4S] cluster is bound at residue C103. H131 contacts (2E)-4-hydroxy-3-methylbut-2-enyl diphosphate. A dimethylallyl diphosphate-binding site is contributed by H131. Position 131 (H131) interacts with isopentenyl diphosphate. Catalysis depends on E133, which acts as the Proton donor. T170 is a binding site for (2E)-4-hydroxy-3-methylbut-2-enyl diphosphate. Residue C198 coordinates [4Fe-4S] cluster. (2E)-4-hydroxy-3-methylbut-2-enyl diphosphate-binding residues include S226, N228, and S271. Positions 226, 228, and 271 each coordinate dimethylallyl diphosphate. S226, N228, and S271 together coordinate isopentenyl diphosphate.

It belongs to the IspH family. The cofactor is [4Fe-4S] cluster.

It catalyses the reaction isopentenyl diphosphate + 2 oxidized [2Fe-2S]-[ferredoxin] + H2O = (2E)-4-hydroxy-3-methylbut-2-enyl diphosphate + 2 reduced [2Fe-2S]-[ferredoxin] + 2 H(+). The enzyme catalyses dimethylallyl diphosphate + 2 oxidized [2Fe-2S]-[ferredoxin] + H2O = (2E)-4-hydroxy-3-methylbut-2-enyl diphosphate + 2 reduced [2Fe-2S]-[ferredoxin] + 2 H(+). Its pathway is isoprenoid biosynthesis; dimethylallyl diphosphate biosynthesis; dimethylallyl diphosphate from (2E)-4-hydroxy-3-methylbutenyl diphosphate: step 1/1. It participates in isoprenoid biosynthesis; isopentenyl diphosphate biosynthesis via DXP pathway; isopentenyl diphosphate from 1-deoxy-D-xylulose 5-phosphate: step 6/6. Functionally, catalyzes the conversion of 1-hydroxy-2-methyl-2-(E)-butenyl 4-diphosphate (HMBPP) into a mixture of isopentenyl diphosphate (IPP) and dimethylallyl diphosphate (DMAPP). Acts in the terminal step of the DOXP/MEP pathway for isoprenoid precursor biosynthesis. This Bacillus licheniformis (strain ATCC 14580 / DSM 13 / JCM 2505 / CCUG 7422 / NBRC 12200 / NCIMB 9375 / NCTC 10341 / NRRL NRS-1264 / Gibson 46) protein is 4-hydroxy-3-methylbut-2-enyl diphosphate reductase.